We begin with the raw amino-acid sequence, 130 residues long: Small ribosomal subunit protein uS9 (130 aa).

The protein belongs to the universal ribosomal protein uS9 family.

In Pseudomonas putida (strain W619), this protein is Small ribosomal subunit protein uS9.